Consider the following 337-residue polypeptide: uncharacterized protein (337 aa).

Residues 42–66 (SHSVSPSPSPSDFSSSSSSSSSSPS) show a composition bias toward low complexity. The interval 42 to 68 (SHSVSPSPSPSDFSSSSSSSSSSPSTF) is disordered. The Exonuclease domain occupies 129–304 (FLVIDLEGKV…DDTKNITRVV (176 aa)). Asp133, Glu135, and Asp234 together coordinate Mg(2+). Glu135 (proton acceptor) is an active-site residue. Position 135 (Glu135) interacts with AMP. The active-site Proton acceptor is the His291. His291 is a binding site for AMP. Position 296 (Asp296) interacts with Mg(2+).

This is an uncharacterized protein from Arabidopsis thaliana (Mouse-ear cress).